Here is a 510-residue protein sequence, read N- to C-terminus: Flavonoid 3',5'-hydroxylase (510 aa).

Cys447 provides a ligand contact to heme.

This sequence belongs to the cytochrome P450 family. Requires heme as cofactor.

It catalyses the reaction a 3',5'-unsubstituted flavanone + 2 reduced [NADPH--hemoprotein reductase] + 2 O2 = a 3',5'-dihydroxyflavanone + 2 oxidized [NADPH--hemoprotein reductase] + 2 H2O + 2 H(+). It functions in the pathway pigment biosynthesis; anthocyanin biosynthesis. Functionally, catalyzes the 3'5'-hydroxylation of naringenin and eriodictyol to form 5,7,3,'4',5'-pentahydroxyflavanone and 3',5'-hydroxylation of dihydrokaempferol and dihydroquercetin to form dihydromyricetin. In Eustoma exaltatum subsp. russellianum (Bluebells), this protein is Flavonoid 3',5'-hydroxylase (CYP75A5).